Consider the following 626-residue polypeptide: Zinc finger protein 471 (626 aa).

The KRAB domain maps to Val-14–Ser-85. C2H2-type zinc fingers lie at residues Phe-206–His-228, Tyr-234–His-256, Phe-262–His-284, Tyr-290–His-312, Tyr-318–His-340, Tyr-346–His-369, Phe-375–His-397, Tyr-403–His-425, Tyr-431–His-453, Tyr-459–His-481, Tyr-487–His-509, Tyr-515–His-537, Tyr-543–His-565, Tyr-571–His-593, and Tyr-599–His-621.

It belongs to the krueppel C2H2-type zinc-finger protein family.

Its subcellular location is the nucleus. Its function is as follows. May be involved in transcriptional regulation. The sequence is that of Zinc finger protein 471 (ZNF471) from Homo sapiens (Human).